Consider the following 435-residue polypeptide: Zinc finger CCCH domain-containing protein 17 (435 aa).

2 disordered regions span residues 1–30 (MDIETDGRFGNKRVHHRLGPANGAASSSTS) and 58–107 (TAKR…GPRH). The segment at 28–54 (STSGKVCIHWRAGRCNRFPCPYLHSEL) adopts a C3H1-type 1 zinc-finger fold. Over residues 77-103 (SGGGGGRGAGGAGGPNKWGRGPGGADG) the composition is skewed to gly residues. The C3H1-type 2 zinc finger occupies 108–135 (KVPDRPCRYFLAGDCSYGEKCRYPHSYS). WD repeat units lie at residues 148-189 (GHEK…GVIN), 191-225 (GREIGCMISEGPWLFVGIPDAVKVWNMQTQAEMNL), 227-264 (GPTGQVYALAVGNELLFAATQDGRILAWRFSAATNGFE), 271-308 (GHQLAVVSLVVGAMRLYSASMDKTIRVWDLATLQCIQT), 311-348 (DHTGVVMSVLCWDQFLLSCSLDQTIKVWAATESGSLEV), 355-395 (EHGA…DRGR), and 397-435 (FSKQEIRAIQVGPSGLFFTGDGTGELKVWQWVIDGSQTK).

This is Zinc finger CCCH domain-containing protein 17 from Oryza sativa subsp. japonica (Rice).